The following is a 528-amino-acid chain: Glucose-6-phosphate isomerase (528 aa).

Glutamate 322 (proton donor) is an active-site residue. Residues histidine 351 and lysine 455 contribute to the active site.

This sequence belongs to the GPI family.

It is found in the cytoplasm. The enzyme catalyses alpha-D-glucose 6-phosphate = beta-D-fructose 6-phosphate. It participates in carbohydrate biosynthesis; gluconeogenesis. Its pathway is carbohydrate degradation; glycolysis; D-glyceraldehyde 3-phosphate and glycerone phosphate from D-glucose: step 2/4. In terms of biological role, catalyzes the reversible isomerization of glucose-6-phosphate to fructose-6-phosphate. The protein is Glucose-6-phosphate isomerase of Nostoc sp. (strain PCC 7120 / SAG 25.82 / UTEX 2576).